Reading from the N-terminus, the 93-residue chain is Small ribosomal subunit protein uS19 (93 aa).

This sequence belongs to the universal ribosomal protein uS19 family.

In terms of biological role, protein S19 forms a complex with S13 that binds strongly to the 16S ribosomal RNA. The protein is Small ribosomal subunit protein uS19 of Frankia casuarinae (strain DSM 45818 / CECT 9043 / HFP020203 / CcI3).